The following is a 537-amino-acid chain: CTP synthase (537 aa).

Residues 1–265 are amidoligase domain; it reads MTKYIFVTGG…GKYLTKRLKL (265 aa). Ser13 contributes to the CTP binding site. Position 13 (Ser13) interacts with UTP. 14–19 provides a ligand contact to ATP; the sequence is GLGKGI. Tyr54 serves as a coordination point for L-glutamine. An ATP-binding site is contributed by Asp71. Asp71 and Glu139 together coordinate Mg(2+). CTP is bound by residues 146–148, 186–191, and Lys222; these read DIE and KTKPTQ. Residues 186–191 and Lys222 contribute to the UTP site; that span reads KTKPTQ. In terms of domain architecture, Glutamine amidotransferase type-1 spans 290-532; that stretch reads EIAIVGKYVK…VRAAKEYKQE (243 aa). Gly351 contacts L-glutamine. Residue Cys378 is the Nucleophile; for glutamine hydrolysis of the active site. Residues 379–382, Glu402, and Arg459 contribute to the L-glutamine site; that span reads FGFQ. Catalysis depends on residues His505 and Glu507.

This sequence belongs to the CTP synthase family. In terms of assembly, homotetramer.

The catalysed reaction is UTP + L-glutamine + ATP + H2O = CTP + L-glutamate + ADP + phosphate + 2 H(+). It carries out the reaction L-glutamine + H2O = L-glutamate + NH4(+). It catalyses the reaction UTP + NH4(+) + ATP = CTP + ADP + phosphate + 2 H(+). It participates in pyrimidine metabolism; CTP biosynthesis via de novo pathway; CTP from UDP: step 2/2. Allosterically activated by GTP, when glutamine is the substrate; GTP has no effect on the reaction when ammonia is the substrate. The allosteric effector GTP functions by stabilizing the protein conformation that binds the tetrahedral intermediate(s) formed during glutamine hydrolysis. Inhibited by the product CTP, via allosteric rather than competitive inhibition. Functionally, catalyzes the ATP-dependent amination of UTP to CTP with either L-glutamine or ammonia as the source of nitrogen. Regulates intracellular CTP levels through interactions with the four ribonucleotide triphosphates. The polypeptide is CTP synthase (Pyrococcus furiosus (strain ATCC 43587 / DSM 3638 / JCM 8422 / Vc1)).